The chain runs to 617 residues: MDLKTAVFNAARDGKLRLLSKLLENKAKDDVVLLMSEKTNGATPLLMAARYGHLDMVDYLLDQCSASVEIGGSVNFDGETIEGAPPLWAASAAGHLKVVRSLLVHGASVNNTTLTNSTPLRAACFDGHLEIVKYLVEHKADLEVANRHGHTCLMISCYKGHKEIAQFLLEKGADVNRKSVKGNTALHDCAESGSLEIMQMLLKYGARMEKDGYGMTPLLSASVTGHTNIVDFLTQNPQTSKNERINALELLGATFVDKKRDLLGALKYWKRAMDMRHSDRTNIVSKPEPQTLIMAYDYAREVNTAEELDNLIADPDEMRMQALLIRERILGPSHPDTSYYIRYRGAVYADSGNFKRCINLWKYALDMQQNNLDPLSPMTASSLLSFAELFSFMLQDRAKGLLGTTVTFDDLMGILCKSVMEIDRAVKQTAPPPDQVQLNKALSIILHLICLLEKVPCSPDQDHFKKQNIYRFLKLHPKGKNNFSPLHLAVDKNTTCVGRYPVCKFPSFQVTAILLECGADVNVRDAEQNSPLHVAALNNHPDIMNLLVKSGAHFDSTNSHNQTACDLLDEKEMAKNLIQPINHTTLQCLAARVIVKHNIQYKQEIPEKLESFVLLHR.

ANK repeat units follow at residues 2 to 31, 40 to 70, 82 to 111, 115 to 144, 148 to 177, 181 to 210, and 213 to 242; these read DLKT…KDDV, NGAT…SVEI, EGAP…SVNN, TNST…DLEV, HGHT…DVNR, KGNT…RMEK, and YGMT…TSKN. TPR repeat units follow at residues 245–279 and 338–371; these read INAL…RHSD and SYYI…QQNN. ANK repeat units lie at residues 481-523 and 527-556; these read NNFS…DVNV and EQNS…HFDS.

Belongs to the fem-1 family. As to quaternary structure, component of a CRL2 E3 ubiquitin-protein ligase complex, also named ECS (Elongin BC-CUL2/5-SOCS-box protein) complex.

It functions in the pathway protein modification; protein ubiquitination. Its function is as follows. Substrate-recognition component of a Cul2-RING (CRL2) E3 ubiquitin-protein ligase complex of the DesCEND (destruction via C-end degrons) pathway, which recognizes a C-degron located at the extreme C terminus of target proteins, leading to their ubiquitination and degradation. The C-degron recognized by the DesCEND pathway is usually a motif of less than ten residues and can be present in full-length proteins, truncated proteins or proteolytically cleaved forms. The CRL2(FEM1C) complex specifically recognizes proteins with an arginine at the C-terminus: recognizes and binds proteins ending with -Lys/Arg-Xaa-Arg and -Lys/Arg-Xaa-Xaa-Arg C-degrons, leading to their ubiquitination and degradation. This Xenopus laevis (African clawed frog) protein is Protein fem-1 homolog C.